A 225-amino-acid polypeptide reads, in one-letter code: UPF0758 protein SEQ_1136 (225 aa).

Residues Pro-102–Leu-224 enclose the MPN domain. His-173, His-175, and Asp-186 together coordinate Zn(2+). Residues His-173–Asp-186 carry the JAMM motif motif.

Belongs to the UPF0758 family.

The sequence is that of UPF0758 protein SEQ_1136 from Streptococcus equi subsp. equi (strain 4047).